An 885-amino-acid chain; its full sequence is Leucine--tRNA ligase (885 aa).

Residues 48-58 (PYPSGKLHMGH) carry the 'HIGH' region motif. Residues 639 to 643 (TMSKS) carry the 'KMSKS' region motif. Lysine 642 contacts ATP.

The protein belongs to the class-I aminoacyl-tRNA synthetase family.

The protein resides in the cytoplasm. It catalyses the reaction tRNA(Leu) + L-leucine + ATP = L-leucyl-tRNA(Leu) + AMP + diphosphate. The chain is Leucine--tRNA ligase from Bordetella petrii (strain ATCC BAA-461 / DSM 12804 / CCUG 43448).